The chain runs to 237 residues: Ribonuclease PH (237 aa).

Phosphate-binding positions include Arg86 and 124 to 126 (GTR).

The protein belongs to the RNase PH family. In terms of assembly, homohexameric ring arranged as a trimer of dimers.

The catalysed reaction is tRNA(n+1) + phosphate = tRNA(n) + a ribonucleoside 5'-diphosphate. Functionally, phosphorolytic 3'-5' exoribonuclease that plays an important role in tRNA 3'-end maturation. Removes nucleotide residues following the 3'-CCA terminus of tRNAs; can also add nucleotides to the ends of RNA molecules by using nucleoside diphosphates as substrates, but this may not be physiologically important. Probably plays a role in initiation of 16S rRNA degradation (leading to ribosome degradation) during starvation. This chain is Ribonuclease PH, found in Methylocella silvestris (strain DSM 15510 / CIP 108128 / LMG 27833 / NCIMB 13906 / BL2).